The primary structure comprises 463 residues: MKLSGISLWLLAASIVHAGKSQFEAFENEFYFKDHLGTISVYHEPYFNGPTTSFPESCAIKQVHLLQRHGSRNPTGDDTATDVSSAQYIDIFQNKLLNGSIPVNFSYPENPLYFVKHWTPVIKAENADQLSSSGRIELFDLGRQVFERYYELFDTDVYDINTAAQERVVDSAEWFSYGMFGDDMQNKTNFIVLPEDDSAGANSLAMYYSCPVYEDNNIDENTTEAAHTSWRNVFLKPIANRLNKYFDSGYNLTVSDVRSLYYICVYEIALRDNSDFCSLFTPSEFLNFEYDSDLDYAYWGGPASEWASTLGGAYVNNLANNLRKGVNNASDRKVFLAFTHDSQIIPVEAALGFFPDITPEHPLPTDKNIFTYSLKTSSFVPFAGNLITELFLCSDNKYYVRHLVNQQVYPLTDCGYGPSGASDGLCELSAYLNSSVRVNSTSNGIANFNSQCQAHSTNVTVYY.

Residues 1 to 18 form the signal peptide; that stretch reads MKLSGISLWLLAASIVHA. The active-site Nucleophile is the His-69. Asn-98, Asn-104, Asn-186, Asn-221, Asn-251, and Asn-328 each carry an N-linked (GlcNAc...) asparagine glycan. The active-site Proton donor is Asp-341. 3 N-linked (GlcNAc...) asparagine glycosylation sites follow: Asn-433, Asn-439, and Asn-458.

It belongs to the histidine acid phosphatase family.

It is found in the secreted. The protein resides in the cell wall. The enzyme catalyses a phosphate monoester + H2O = an alcohol + phosphate. Its function is as follows. May dephosphorylate thiamine phosphates. The sequence is that of Thiamine-repressible acid phosphatase pho4 (pho4) from Schizosaccharomyces pombe (strain 972 / ATCC 24843) (Fission yeast).